The sequence spans 436 residues: Acetyl-CoA decarbonylase/synthase complex subunit delta 1 (436 aa).

This sequence belongs to the CdhD family. In terms of assembly, heterodimer of delta and gamma chains. The ACDS complex is made up of alpha, epsilon, beta, gamma and delta chains with a probable stoichiometry of (alpha(2)epsilon(2))(4)-beta(8)-(gamma(1)delta(1))(8) (Potential).

Its pathway is one-carbon metabolism; methanogenesis from acetate. Part of a complex that catalyzes the reversible cleavage of acetyl-CoA, allowing growth on acetate as sole source of carbon and energy. Probably maintains the overall quaternary structure of the ACDS complex. The sequence is that of Acetyl-CoA decarbonylase/synthase complex subunit delta 1 (cdhD1) from Methanosarcina thermophila.